The following is a 49-amino-acid chain: Small ribosomal subunit protein uS19c (49 aa).

This sequence belongs to the universal ribosomal protein uS19 family.

It is found in the plastid. The protein localises to the chloroplast. Its function is as follows. Protein S19 forms a complex with S13 that binds strongly to the 16S ribosomal RNA. This Sinapis alba (White mustard) protein is Small ribosomal subunit protein uS19c (rps19).